A 332-amino-acid polypeptide reads, in one-letter code: Serine, glycine, tyrosine and glutamine-rich protein (332 aa).

The N-terminal stretch at 1–17 (MMKTVLLLVVLVGVAYC) is a signal peptide. Residues 39 to 81 (SSSSSSSSSSGGGGSSGGGASGGGGGGGSSGGGGASGGGGGGS) are disordered. The span at 48–81 (SGGGGSSGGGASGGGGGGGSSGGGGASGGGGGGS) shows a compositional bias: gly residues.

In terms of tissue distribution, prismatic layer of shell (at protein level). Expressed primarily in the mantle with highest level in the mantle edge and lower level in the mantle pallium.

The protein localises to the secreted. This is Serine, glycine, tyrosine and glutamine-rich protein from Margaritifera margaritifera (Freshwater pearl mussel).